Here is a 386-residue protein sequence, read N- to C-terminus: MLQLNPTPPAPGRWRTILENDFFPKNRRRDIDGLRGLAIALVVLFHAGWLKGGFIGVDVFVVISGYFMGRSALMQHPFQPVRFVCRRLYRLLPALLCMVALVSAGMLWWVLQSDRADIALNGAYALVYLSNIWASGHVGYFQGQAVAYPFLHTWSLSLEMQFYAIIFIMALLLPLTRHRRLVLSAIFSASAAYCAYAWHTGDSQAYYNILDRLWQFALGTMVWMLPRPKLPRAAADAVYAAAVAVIVGAGLFYPLSYACPSWMTVFPCGAVVLIIMLPDTRVGRWCLVPLSPLGVISYSVYLWHWPGIVVANYLLFFQVHGAMMAGVLALVMVVSLLSYVLVERTGLDYENRAPVAARNRGAALLVAACLGLAAVLAYISHVSRVH.

The next 10 helical transmembrane spans lie at 37–57, 91–111, 118–138, 156–176, 181–201, 237–257, 258–278, 290–310, 322–342, and 362–382; these read LAIA…FIGV, LLPA…WWVL, IALN…SGHV, LSLE…LPLT, LVLS…WHTG, AVYA…PLSY, ACPS…IMLP, LSPL…GIVV, AMMA…YVLV, and AALL…ISHV.

This sequence belongs to the acyltransferase 3 family.

Its subcellular location is the cell inner membrane. It participates in glycan metabolism; bacterial cellulose biosynthesis. Its function is as follows. May acylate a glucose moiety into cellulose fibrils, in cooperation with BcsABII and BcsCII. This Komagataeibacter xylinus (Gluconacetobacter xylinus) protein is Putative membrane-bound transacylase BcsY (bcsY).